We begin with the raw amino-acid sequence, 1373 residues long: DNA-directed RNA polymerase subunit beta'' (1373 aa).

Zn(2+) is bound by residues Cys220, Cys291, Cys298, and Cys301.

It belongs to the RNA polymerase beta' chain family. RpoC2 subfamily. In plastids the minimal PEP RNA polymerase catalytic core is composed of four subunits: alpha, beta, beta', and beta''. When a (nuclear-encoded) sigma factor is associated with the core the holoenzyme is formed, which can initiate transcription. Requires Zn(2+) as cofactor.

It is found in the plastid. It localises to the chloroplast. The enzyme catalyses RNA(n) + a ribonucleoside 5'-triphosphate = RNA(n+1) + diphosphate. Its function is as follows. DNA-dependent RNA polymerase catalyzes the transcription of DNA into RNA using the four ribonucleoside triphosphates as substrates. The sequence is that of DNA-directed RNA polymerase subunit beta'' from Silene latifolia (White campion).